Consider the following 193-residue polypeptide: Ribosomal RNA large subunit methyltransferase E (193 aa).

Residues Gly49, Phe51, Asp69, Asp86, and Asp106 each coordinate S-adenosyl-L-methionine. Residue Lys146 is the Proton acceptor of the active site.

This sequence belongs to the class I-like SAM-binding methyltransferase superfamily. RNA methyltransferase RlmE family.

It is found in the cytoplasm. It catalyses the reaction uridine(2552) in 23S rRNA + S-adenosyl-L-methionine = 2'-O-methyluridine(2552) in 23S rRNA + S-adenosyl-L-homocysteine + H(+). Functionally, specifically methylates the uridine in position 2552 of 23S rRNA at the 2'-O position of the ribose in the fully assembled 50S ribosomal subunit. This Brachyspira hyodysenteriae (strain ATCC 49526 / WA1) protein is Ribosomal RNA large subunit methyltransferase E.